The sequence spans 377 residues: Serine protease inhibitor (377 aa).

Positions 1–27 are cleaved as a signal peptide; it reads MAALQAAVSSQLAISFFSSLIVPGAEK. An N-linked (GlcNAc...) asparagine glycan is attached at Asn301. The interval 328 to 349 is RCL; the sequence is GTEAAAATGFGVNFMSMPMQVR. N-linked (GlcNAc...) asparagine glycosylation occurs at Asn361.

The protein belongs to the serpin family.

Inhibitor of serine proteases. Inhibits chymotrypsin, cathepsin G and human neutrophil elastase. In Cyanea capillata (Lion's mane jellyfish), this protein is Serine protease inhibitor.